A 446-amino-acid polypeptide reads, in one-letter code: Exodeoxyribonuclease 7 large subunit (446 aa).

This sequence belongs to the XseA family. In terms of assembly, heterooligomer composed of large and small subunits.

It is found in the cytoplasm. It carries out the reaction Exonucleolytic cleavage in either 5'- to 3'- or 3'- to 5'-direction to yield nucleoside 5'-phosphates.. In terms of biological role, bidirectionally degrades single-stranded DNA into large acid-insoluble oligonucleotides, which are then degraded further into small acid-soluble oligonucleotides. In Staphylococcus carnosus (strain TM300), this protein is Exodeoxyribonuclease 7 large subunit.